The sequence spans 281 residues: Src-like-adapter (281 aa).

Residues M1–E20 are disordered. Residue G2 is the site of N-myristoyl glycine attachment. The span at S7 to E20 shows a compositional bias: low complexity. Positions L22–H82 constitute an SH3 domain. The region spanning W84–C175 is the SH2 domain. An SLA C-terminal region spans residues C190–D281. The residue at position 258 (S258) is a Phosphoserine. Position 278 is a phosphotyrosine (Y278).

Homodimer. Interacts with phosphorylated CBL, SYK and LAT. Homodimerization and interaction with phosphorylated CBL occurs via its C-terminal domain. Interacts with PDGFRB and EPHA2. Interacts with phosphorylated proteins ZAP70; CD3Z; VAV1 and LCP2 via its SH2 domain. As to expression, predominantly expressed in lymphoid tissues. Highly expressed in spleen, thymus and lymph nodes. Weakly expressed in lung and brain. Expressed in T-cells and at low level in B-cells.

It is found in the cytoplasm. The protein localises to the endosome. Adapter protein, which negatively regulates T-cell receptor (TCR) signaling. Inhibits T-cell antigen-receptor induced activation of nuclear factor of activated T-cells. Involved in the negative regulation of positive selection and mitosis of T-cells. May act by linking signaling proteins such as ZAP70 with CBL, leading to a CBL dependent degradation of signaling proteins. The chain is Src-like-adapter (Sla) from Mus musculus (Mouse).